The sequence spans 297 residues: Nucleotide-binding protein Bphy_0322 (297 aa).

Residue 8 to 15 (GISGSGKS) coordinates ATP. 57 to 60 (DARS) contributes to the GTP binding site.

This sequence belongs to the RapZ-like family.

Functionally, displays ATPase and GTPase activities. This chain is Nucleotide-binding protein Bphy_0322, found in Paraburkholderia phymatum (strain DSM 17167 / CIP 108236 / LMG 21445 / STM815) (Burkholderia phymatum).